Reading from the N-terminus, the 98-residue chain is NADH-ubiquinone oxidoreductase chain 4L (98 aa).

Transmembrane regions (helical) follow at residues 1–21 (MSMV…GLLM), 29–49 (SLLC…ATIL), and 61–81 (IILL…LVTV).

The protein belongs to the complex I subunit 4L family. In terms of assembly, core subunit of respiratory chain NADH dehydrogenase (Complex I) which is composed of 45 different subunits.

It is found in the mitochondrion inner membrane. The enzyme catalyses a ubiquinone + NADH + 5 H(+)(in) = a ubiquinol + NAD(+) + 4 H(+)(out). Functionally, core subunit of the mitochondrial membrane respiratory chain NADH dehydrogenase (Complex I) which catalyzes electron transfer from NADH through the respiratory chain, using ubiquinone as an electron acceptor. Part of the enzyme membrane arm which is embedded in the lipid bilayer and involved in proton translocation. The polypeptide is NADH-ubiquinone oxidoreductase chain 4L (MT-ND4L) (Pusa caspica (Caspian seal)).